Consider the following 448-residue polypeptide: C4-dicarboxylate transport protein (448 aa).

7 helical membrane-spanning segments follow: residues 22-42 (FQVV…PAFA), 55-75 (LVKM…IAGM), 90-110 (TYFL…AHVV), 137-157 (ELSL…SAFV), 159-179 (GNIL…ALVG), 199-219 (LVHM…AFTI), and 232-252 (WLVG…LGIV). Residues 428–448 (RAPPLQAPVPPPDAVAPVSAR) form a disordered region. Residues 432 to 441 (LQAPVPPPDA) are compositionally biased toward pro residues.

It belongs to the dicarboxylate/amino acid:cation symporter (DAACS) (TC 2.A.23) family.

The protein resides in the cell inner membrane. In terms of biological role, responsible for the transport of dicarboxylates such as succinate, fumarate, and malate from the periplasm across the membrane. The protein is C4-dicarboxylate transport protein of Xanthomonas campestris pv. campestris (strain 8004).